We begin with the raw amino-acid sequence, 272 residues long: Ribosomal RNA small subunit methyltransferase A (272 aa).

S-adenosyl-L-methionine contacts are provided by histidine 11, leucine 13, glycine 38, glutamate 59, aspartate 84, and asparagine 109.

This sequence belongs to the class I-like SAM-binding methyltransferase superfamily. rRNA adenine N(6)-methyltransferase family. RsmA subfamily.

It is found in the cytoplasm. It catalyses the reaction adenosine(1518)/adenosine(1519) in 16S rRNA + 4 S-adenosyl-L-methionine = N(6)-dimethyladenosine(1518)/N(6)-dimethyladenosine(1519) in 16S rRNA + 4 S-adenosyl-L-homocysteine + 4 H(+). Its function is as follows. Specifically dimethylates two adjacent adenosines (A1518 and A1519) in the loop of a conserved hairpin near the 3'-end of 16S rRNA in the 30S particle. May play a critical role in biogenesis of 30S subunits. The protein is Ribosomal RNA small subunit methyltransferase A of Rippkaea orientalis (strain PCC 8801 / RF-1) (Cyanothece sp. (strain PCC 8801)).